The chain runs to 326 residues: Apolipoprotein F (326 aa).

A signal peptide spans 1 to 35 (MTGLCGYSAPDMRGLRLIMIPVELLLCYLLLHPVD). Positions 36-164 (ATSYGKQTNV…EQQSTGRVGR (129 aa)) are excised as a propeptide. Residue N118 is glycosylated (N-linked (GlcNAc...) asparagine). O-linked (GalNAc...) threonine glycosylation is present at T274. The residue at position 323 (S323) is a Phosphoserine.

The protein belongs to the apolipoprotein F family. In terms of processing, O-glycosylated with core 1 or possibly core 8 glycans. As to expression, expressed by the liver and secreted in plasma.

It localises to the secreted. Its function is as follows. Minor apolipoprotein that associates with LDL. Inhibits cholesteryl ester transfer protein (CETP) activity and appears to be an important regulator of cholesterol transport. Also associates to a lesser degree with VLDL, Apo-AI and Apo-AII. In Homo sapiens (Human), this protein is Apolipoprotein F (APOF).